Reading from the N-terminus, the 273-residue chain is 4-hydroxybenzoate octaprenyltransferase (273 aa).

The next 8 helical transmembrane spans lie at 7-27 (IGIY…SEGF), 30-50 (LKLL…GCVI), 83-103 (FFVL…WLTI), 122-142 (WTYF…LMAF), 146-166 (LNEI…WTVI), 197-217 (LIIG…SNVF), 221-241 (ISYH…QYLI), and 253-273 (FLHN…SVGL).

This sequence belongs to the UbiA prenyltransferase family. Requires Mg(2+) as cofactor.

It is found in the cell inner membrane. The enzyme catalyses all-trans-octaprenyl diphosphate + 4-hydroxybenzoate = 4-hydroxy-3-(all-trans-octaprenyl)benzoate + diphosphate. It functions in the pathway cofactor biosynthesis; ubiquinone biosynthesis. Functionally, catalyzes the prenylation of para-hydroxybenzoate (PHB) with an all-trans polyprenyl group. Mediates the second step in the final reaction sequence of ubiquinone-8 (UQ-8) biosynthesis, which is the condensation of the polyisoprenoid side chain with PHB, generating the first membrane-bound Q intermediate 3-octaprenyl-4-hydroxybenzoate. The polypeptide is 4-hydroxybenzoate octaprenyltransferase (Vesicomyosocius okutanii subsp. Calyptogena okutanii (strain HA)).